The sequence spans 825 residues: IQ and AAA domain-containing protein 1-like (825 aa).

The IQ domain occupies 206-235; that stretch reads RDQGAIVIQKVWKGYLQRKRIEQDRRVEME. Positions 344–366 are enriched in basic and acidic residues; that stretch reads QAQESRKKDQEKKEKNKEKEKEK. Disordered stretches follow at residues 344 to 378 and 459 to 487; these read QAQE…KEEK and DREE…KDLT. The segment covering 467–482 has biased composition (basic residues); that stretch reads KSPKKKGGKKSGKKKK. Residue 572–579 participates in ATP binding; sequence GPSGMGKK.

Belongs to the AAA ATPase family.

In Mus musculus (Mouse), this protein is IQ and AAA domain-containing protein 1-like (Iqca1l).